We begin with the raw amino-acid sequence, 303 residues long: Probable cell division protein WhiA (303 aa).

The H-T-H motif DNA-binding region spans 272-303 (SIQQLADSLSRPLTKSGVNHRLRKINKIADEL).

This sequence belongs to the WhiA family.

Functionally, involved in cell division and chromosome segregation. This chain is Probable cell division protein WhiA, found in Streptococcus sanguinis (strain SK36).